The primary structure comprises 398 residues: S-adenosylmethionine synthase (398 aa).

Histidine 26 provides a ligand contact to ATP. Residue aspartate 28 coordinates Mg(2+). A K(+)-binding site is contributed by glutamate 54. L-methionine contacts are provided by glutamate 67 and glutamine 110. The flexible loop stretch occupies residues glutamine 110–glutamate 120. Residues aspartate 177–lysine 179, arginine 243–phenylalanine 244, aspartate 252, arginine 258–lysine 259, alanine 275, and lysine 279 each bind ATP. Aspartate 252 contacts L-methionine. Lysine 283 lines the L-methionine pocket.

The protein belongs to the AdoMet synthase family. Homotetramer; dimer of dimers. Mg(2+) is required as a cofactor. The cofactor is K(+).

It is found in the cytoplasm. It carries out the reaction L-methionine + ATP + H2O = S-adenosyl-L-methionine + phosphate + diphosphate. It functions in the pathway amino-acid biosynthesis; S-adenosyl-L-methionine biosynthesis; S-adenosyl-L-methionine from L-methionine: step 1/1. In terms of biological role, catalyzes the formation of S-adenosylmethionine (AdoMet) from methionine and ATP. The overall synthetic reaction is composed of two sequential steps, AdoMet formation and the subsequent tripolyphosphate hydrolysis which occurs prior to release of AdoMet from the enzyme. The polypeptide is S-adenosylmethionine synthase (Desulfotalea psychrophila (strain LSv54 / DSM 12343)).